We begin with the raw amino-acid sequence, 937 residues long: MISAPDVVAFTKEEEYEEEPYNEPALPEEYSVPLFPFASQGANPWSKLSGAKFSRDFILISEFSEQVGPQPLLTIPNDTKVFGTFDLNYFSLRIMSVDYQASFVGHPPGSAYPKLNFVEDSKVVLGDSKEGAFAYVHHLTLYDLEARGFVRPFCMAYISADQHKIMQQFQELSAEFSRASECLKTGNRKAFAGELEKKLKDLDYTRTVLHTETEIQKKANDKGFYSSQAIEKANELASVEKSIIEHQDLLKQIRSYPHRKLKGHDLCPGEMEHIQDQASQASTTSNPDESADTDLYTCRPAYTPKLIKAKSTKCFDKKLKTLEELCDTEYFTQTLAQLSHIEHMFRGDLCYLLTSQIDRALLKQQHITNFLFEDFVEVDDRMVEKQESIPSKPSQDRPPSSSLEECPIPKVLISVGSYKSSVESVLIKMEQELGDEEYKEVEVTELSSFDPQENLDYLDMDMKGSISSGESIEVLGTEKSTSVLSKSDSQASLTVPLSPQVVRSKAVSHRTISEDSIEVLSTCPSEALIPDDFKASYPSAINEEESYPDGNEGAIRFQASISPPELGETEEGSIENTPSQIDSSCCIGKESDGQLVLPSTPAHTHSDEDGVVSSPPQRHRQKDQGFRVDFSVENANPSSRDNSCEGFPAYELDPSHLLASRDISKTSLDNYSDTTSYVSSVASTSSDRIPSAYPAGLSSDRHKKRAGQNALKFIRQYPFAHPAIYSLLSGRTLVVLGEDEAIVRKLVTALAIFVPSYGCYAKPVKHWASSPLHIMDFQKWKLIGLQRVASPAGAGTLHALSRYSRYTSILDLDNKTLRCPLYRGTLVPRLADHRTQIKRGSTYYLHVQSMLTQLCSKAFLYTFCHHLHLPTHDKETEELVASRQMSFLKLTLGLVNEDVRVVQYLAELLKLHYMQESPGTSHPMLRFDYVPSFLYKI.

A required for the homodimerization of the C9orf72-SMCR8 complex region spans residues Met1–Leu349. The 173-residue stretch at Leu48–Asn220 folds into the uDENN FLCN/SMCR8-type domain. Disordered regions lie at residues Ile274–Thr293 and Glu384–Glu405. Composition is skewed to polar residues over residues Asp276–Asp288 and Ser388–Leu403. The cDENN FLCN/SMCR8-type domain maps to Lys318–Thr835. Phosphoserine; by TBK1 is present on Ser402. Ser417, Ser468, Ser471, Ser489, Ser492, and Ser498 each carry phosphoserine. The disordered stretch occupies residues Pro564–Glu645. The span at Ile574–Ser583 shows a compositional bias: polar residues. The residue at position 790 (Ser790) is a Phosphoserine. Thr796 is modified (phosphothreonine; by TBK1). Residues Tyr844–Lys910 enclose the dDENN FLCN/SMCR8-type domain. The interval Thr862–Met914 is interacts with WDR41 within the C9orf72-SMCR8 complex.

The protein belongs to the SMCR8 family. In terms of assembly, component of the C9orf72-SMCR8 complex, at least composed of C9orf72, SMCR8 and WDR41. The complex is formed of two protomers, each individually consisting of one molecule each of C9orf72, SMCR8 and WDR41. The protomers homodimerize via an interaction between C9orf72 (via C-terminus) and SMCR8 (via N-terminus). Within each protomer SMCR8 (via DENN domain) acts as a bridging protein between WDR41 (via C-terminus and N-terminus) and C9orf72 (via C-terminus). The C9orf72-SMCR8 complex associates with the ULK1/ATG1 kinase complex. Interacts with C9orf72; the interaction is direct. Interacts with DLG4/PSD-95. Phosphorylation by TBK1 is required to promote autophagosome maturation. Phosphorylated by ULK1. In terms of tissue distribution, expressed in all tissues tested.

Its subcellular location is the cytoplasm. The protein localises to the nucleus. The protein resides in the presynapse. It localises to the postsynapse. In terms of biological role, component of the C9orf72-SMCR8 complex, a complex that has guanine nucleotide exchange factor (GEF) activity and regulates autophagy. In the complex, C9orf72 and SMCR8 probably constitute the catalytic subunits that promote the exchange of GDP to GTP, converting inactive GDP-bound RAB8A and RAB39B into their active GTP-bound form, thereby promoting autophagosome maturation. The C9orf72-SMCR8 complex also acts as a negative regulator of autophagy initiation by interacting with the ULK1/ATG1 kinase complex and inhibiting its protein kinase activity. As part of the C9orf72-SMCR8 complex, stimulates RAB8A and RAB11A GTPase activity in vitro. Acts as a regulator of mTORC1 signaling by promoting phosphorylation of mTORC1 substrates. In addition to its activity in the cytoplasm within the C9orf72-SMCR8 complex, SMCR8 also localizes in the nucleus, where it associates with chromatin and negatively regulates expression of suppresses ULK1 and WIPI2 genes. The chain is Guanine nucleotide exchange protein SMCR8 from Homo sapiens (Human).